The following is a 398-amino-acid chain: MPVPASWPHLPSPFLLMTLLLGRLTGVAGEDELQVIQPEKSVSVAAGESATLRCAMTSLIPVGPIMWFRGAGAGRELIYNQKEGHFPRVTTVSELTKRNNLDFSISISNITPADAGTYYCVKFRKGSPDDVEFKSGAGTELSVRAKPSAPVVSGPAVRATPEHTVSFTCESHGFSPRDITLKWFKNGNELSDFQTNVDPAGDSVSYSIHSTARVVLTRGDVHSQVICEIAHITLQGDPLRGTANLSEAIRVPPTLEVTQQPMRAENQANVTCQVSNFYPRGLQLTWLENGNVSRTETASTLIENKDGTYNWMSWLLVNTCAHRDDVVLTCQVEHDGQQAVSKSYALEISAHQKEHGSDITHEAALAPTAPLLVALLLGPKLLLVVGVSAIYICWKQKA.

The N-terminal stretch at 1–29 (MPVPASWPHLPSPFLLMTLLLGRLTGVAG) is a signal peptide. The region spanning 30–136 (EDELQVIQPE…SPDDVEFKSG (107 aa)) is the Ig-like V-type domain. The Extracellular segment spans residues 30–371 (EDELQVIQPE…EAALAPTAPL (342 aa)). 2 disulfides stabilise this stretch: cysteine 54–cysteine 120 and cysteine 169–cysteine 227. Ig-like C1-type domains follow at residues 147–246 (PSAP…ANLS) and 253–347 (PTLE…YALE). Residues asparagine 244, asparagine 269, and asparagine 291 are each glycosylated (N-linked (GlcNAc...) asparagine). Residues 372 to 392 (LVALLLGPKLLLVVGVSAIYI) form a helical membrane-spanning segment. Residues 393–398 (CWKQKA) are Cytoplasmic-facing.

In terms of assembly, homodimer; disulfide-linked. Interacts with TYROBP. This interaction results in the recruitment of SYK. N-glycosylated. In terms of tissue distribution, detected in monocytes and dendritic cells.

Its subcellular location is the cell membrane. Its function is as follows. Immunoglobulin-like cell surface receptor involved in the negative regulation of receptor tyrosine kinase-coupled signaling processes. Also participates in the recruitment of tyrosine kinase SYK. Triggers activation of myeloid cells when associated with TYROBP. This Homo sapiens (Human) protein is Signal-regulatory protein beta-1 (SIRPB1).